A 530-amino-acid chain; its full sequence is Glucose-6-phosphate isomerase (530 aa).

Residue Glu-356 is the Proton donor of the active site. Residues His-387 and Lys-502 contribute to the active site.

Belongs to the GPI family.

The protein resides in the cytoplasm. It carries out the reaction alpha-D-glucose 6-phosphate = beta-D-fructose 6-phosphate. The protein operates within carbohydrate biosynthesis; gluconeogenesis. Its pathway is carbohydrate degradation; glycolysis; D-glyceraldehyde 3-phosphate and glycerone phosphate from D-glucose: step 2/4. In terms of biological role, catalyzes the reversible isomerization of glucose-6-phosphate to fructose-6-phosphate. This chain is Glucose-6-phosphate isomerase, found in Borreliella afzelii (strain PKo) (Borrelia afzelii).